The primary structure comprises 386 residues: Patatin-16 (386 aa).

An N-terminal signal peptide occupies residues 1–23; the sequence is MATTKSFLILIVMILATTSSTFA. Residues 32-229 enclose the PNPLA domain; the sequence is LSIDGGGIKG…TVADPALLSV (198 aa). Positions 36–41 match the GXGXXG motif; it reads GGGIKG. The GXSXG signature appears at 75 to 79; sequence GTSTG. Residue S77 is the Nucleophile of the active site. N115 is a glycosylation site (N-linked (GlcNAc...) asparagine). Residue D215 is the Proton acceptor of the active site. The DGA/G motif lies at 215-217; sequence DGA. Residues 360-384 are a coiled coil; sequence ETYEEALKRFAKLLSDRKKLRANKA.

The protein belongs to the patatin family.

It localises to the vacuole. Its function is as follows. Probable lipolytic acyl hydrolase (LAH), an activity which is thought to be involved in the response of tubers to pathogens. The protein is Patatin-16 of Solanum tuberosum (Potato).